The sequence spans 980 residues: Macrophage colony-stimulating factor 1 receptor (980 aa).

The first 19 residues, 1-19 (MGPRALLVLLVATAWHAQG), serve as a signal peptide directing secretion. Residues 20 to 514 (VPVIQPSGPE…QLPDELLFTP (495 aa)) are Extracellular-facing. 5 consecutive Ig-like C2-type domains span residues 21-100 (PVIQ…IHLY), 107-197 (PWKV…KVQK), 202-297 (PATL…RVVE), 299-397 (AYLN…LTLR), and 400-499 (PEVR…WPIS). Cysteine 42 and cysteine 84 form a disulfide bridge. Residues asparagine 45, asparagine 73, asparagine 94, asparagine 153, asparagine 275, asparagine 286, asparagine 302, asparagine 335, asparagine 410, asparagine 477, and asparagine 490 are each glycosylated (N-linked (GlcNAc...) asparagine). 2 disulfides stabilise this stretch: cysteine 127/cysteine 177 and cysteine 224/cysteine 278. A disulfide bond links cysteine 417 and cysteine 482. Residues 515–535 (VLLTCMSIMALLLLLLLLLLY) traverse the membrane as a helical segment. The Cytoplasmic portion of the chain corresponds to 536-980 (KYKQKPKYQV…LLQPNNYQFC (445 aa)). The regulatory juxtamembrane domain stretch occupies residues 539–571 (QKPKYQVRWKIIESYEGNSYTFIDPTQLPYNEK). A phosphotyrosine; by autocatalysis mark is found at tyrosine 543 and tyrosine 558. The region spanning 579–908 (LQFGKTLGAG…PTFQQICSLL (330 aa)) is the Protein kinase domain. Residues 585 to 593 (LGAGAFGKV) and lysine 613 each bind ATP. Phosphotyrosine; by autocatalysis is present on residues tyrosine 696 and tyrosine 705. Phosphoserine is present on serine 710. Tyrosine 720 carries the post-translational modification Phosphotyrosine; by autocatalysis. Residues 723 to 743 (MRPVSTSSSNDSFSEEDLGKE) are disordered. The Proton acceptor role is filled by aspartate 776. The interval 794-816 (DFGLARDIMNDSNYIVKGNARLP) is activation loop. A phosphotyrosine; by autocatalysis mark is found at tyrosine 807 and tyrosine 921. A disordered region spans residues 918-959 (VPNYTNLPSSSSSSSSSSSSCRTGSGGGSSSEPEEESSSEHL). Residues 926–940 (SSSSSSSSSSSSCRT) are compositionally biased toward low complexity. Tyrosine 977 is modified (phosphotyrosine; by autocatalysis).

The protein belongs to the protein kinase superfamily. Tyr protein kinase family. CSF-1/PDGF receptor subfamily. As to quaternary structure, monomer. Homodimer. Interacts with CSF1 and IL34. Interaction with dimeric CSF1 or IL34 leads to receptor homodimerization. Interacts with INPPL1/SHIP2 and THOC5. Interacts (tyrosine phosphorylated) with PLCG2 (via SH2 domain). Interacts (tyrosine phosphorylated) with PIK3R1 (via SH2 domain). Interacts (tyrosine phosphorylated) with FYN, YES1 and SRC (via SH2 domain). Interacts (tyrosine phosphorylated) with CBL, GRB2 and SLA2. Post-translationally, autophosphorylated in response to CSF1 or IL34 binding. Phosphorylation at Tyr-558 is important for normal down-regulation of signaling by ubiquitination, internalization and degradation. Phosphorylation at Tyr-558 and Tyr-807 is important for interaction with SRC family members, including FYN, YES1 and SRC, and for subsequent activation of these protein kinases. Phosphorylation at Tyr-696 and Tyr-921 is important for interaction with GRB2. Phosphorylation at Tyr-720 is important for interaction with PIK3R1. Phosphorylation at Tyr-720 and Tyr-807 is important for interaction with PLCG2. Phosphorylation at Tyr-977 is important for interaction with CBL. Dephosphorylation by PTPN2 negatively regulates downstream signaling and macrophage differentiation. In terms of processing, ubiquitinated. Becomes rapidly polyubiquitinated after autophosphorylation, leading to its degradation.

Its subcellular location is the cell membrane. The enzyme catalyses L-tyrosyl-[protein] + ATP = O-phospho-L-tyrosyl-[protein] + ADP + H(+). Its activity is regulated as follows. Present in an inactive conformation in the absence of bound ligand. CSF1 or IL34 binding leads to dimerization and activation by autophosphorylation on tyrosine residues. Functionally, tyrosine-protein kinase that acts as a cell-surface receptor for CSF1 and IL34 and plays an essential role in the regulation of survival, proliferation and differentiation of hematopoietic precursor cells, especially mononuclear phagocytes, such as macrophages and monocytes. Promotes the release of pro-inflammatory chemokines in response to IL34 and CSF1, and thereby plays an important role in innate immunity and in inflammatory processes. Plays an important role in the regulation of osteoclast proliferation and differentiation, the regulation of bone resorption, and is required for normal bone and tooth development. Required for normal male and female fertility, and for normal development of milk ducts and acinar structures in the mammary gland during pregnancy. Promotes reorganization of the actin cytoskeleton, regulates formation of membrane ruffles, cell adhesion and cell migration, and promotes cancer cell invasion. Activates several signaling pathways in response to ligand binding, including the ERK1/2 and the JNK pathway. Phosphorylates PIK3R1, PLCG2, GRB2, SLA2 and CBL. Activation of PLCG2 leads to the production of the cellular signaling molecules diacylglycerol and inositol 1,4,5-trisphosphate, that then lead to the activation of protein kinase C family members, especially PRKCD. Phosphorylation of PIK3R1, the regulatory subunit of phosphatidylinositol 3-kinase, leads to activation of the AKT1 signaling pathway. Activated CSF1R also mediates activation of the MAP kinases MAPK1/ERK2 and/or MAPK3/ERK1, and of the SRC family kinases SRC, FYN and YES1. Activated CSF1R transmits signals both via proteins that directly interact with phosphorylated tyrosine residues in its intracellular domain, or via adapter proteins, such as GRB2. Promotes activation of STAT family members STAT3, STAT5A and/or STAT5B. Promotes tyrosine phosphorylation of SHC1 and INPP5D/SHIP-1. Receptor signaling is down-regulated by protein phosphatases, such as INPP5D/SHIP-1, that dephosphorylate the receptor and its downstream effectors, and by rapid internalization of the activated receptor. In the central nervous system, may play a role in the development of microglia macrophages. The polypeptide is Macrophage colony-stimulating factor 1 receptor (CSF1R) (Felis catus (Cat)).